The following is a 348-amino-acid chain: tRNA-specific 2-thiouridylase MnmA (348 aa).

ATP-binding positions include 8–15 and M34; that span reads LLSGGVDS. C105 acts as the Nucleophile in catalysis. A disulfide bond links C105 and C197. Residue G129 coordinates ATP. Positions 147–149 are interaction with tRNA; it reads KDQ. C197 (cysteine persulfide intermediate) is an active-site residue.

The protein belongs to the MnmA/TRMU family.

Its subcellular location is the cytoplasm. It carries out the reaction S-sulfanyl-L-cysteinyl-[protein] + uridine(34) in tRNA + AH2 + ATP = 2-thiouridine(34) in tRNA + L-cysteinyl-[protein] + A + AMP + diphosphate + H(+). Its function is as follows. Catalyzes the 2-thiolation of uridine at the wobble position (U34) of tRNA, leading to the formation of s(2)U34. This is tRNA-specific 2-thiouridylase MnmA from Fervidobacterium nodosum (strain ATCC 35602 / DSM 5306 / Rt17-B1).